We begin with the raw amino-acid sequence, 156 residues long: Small ribosomal subunit protein uS7 (156 aa).

Belongs to the universal ribosomal protein uS7 family. In terms of assembly, part of the 30S ribosomal subunit. Contacts proteins S9 and S11.

One of the primary rRNA binding proteins, it binds directly to 16S rRNA where it nucleates assembly of the head domain of the 30S subunit. Is located at the subunit interface close to the decoding center, probably blocks exit of the E-site tRNA. The sequence is that of Small ribosomal subunit protein uS7 from Cronobacter sakazakii (strain ATCC BAA-894) (Enterobacter sakazakii).